The following is a 654-amino-acid chain: Macrolide export ATP-binding/permease protein MacB (654 aa).

Positions 6 to 244 (LKVEDLTRRF…EQAAKTPSAS (239 aa)) constitute an ABC transporter domain. ATP is bound at residue 42-49 (GASGSGKS). 4 consecutive transmembrane segments (helical) span residues 280–300 (FLTM…VALG), 529–549 (LLIS…VMNI), 584–604 (LVCL…GFAF), and 619–639 (SIIW…FLPA).

It belongs to the ABC transporter superfamily. Macrolide exporter (TC 3.A.1.122) family. Homodimer. Part of the tripartite efflux system MacAB-TolC, which is composed of an inner membrane transporter, MacB, a periplasmic membrane fusion protein, MacA, and an outer membrane component, TolC. The complex forms a large protein conduit and can translocate molecules across both the inner and outer membranes. Interacts with MacA.

The protein resides in the cell inner membrane. Its function is as follows. Part of the tripartite efflux system MacAB-TolC. MacB is a non-canonical ABC transporter that contains transmembrane domains (TMD), which form a pore in the inner membrane, and an ATP-binding domain (NBD), which is responsible for energy generation. Confers resistance against macrolides. The sequence is that of Macrolide export ATP-binding/permease protein MacB from Vibrio parahaemolyticus serotype O3:K6 (strain RIMD 2210633).